The chain runs to 270 residues: Coiled-coil domain-containing protein 3 (270 aa).

The N-terminal stretch at 1–21 (MLRQLLLAALCLAGPPAPARA) is a signal peptide. N100 carries an N-linked (GlcNAc...) asparagine glycan. The stretch at 188 to 251 (SVQKALFEEE…NQKLSEKLAA (64 aa)) forms a coiled coil.

As to quaternary structure, homodimer. In terms of tissue distribution, expressed in umbilical vein endothelial cells (HUVEC), and at lower levels in aortic smooth muscle cells (HASMC).

It localises to the secreted. Functionally, negatively regulates TNF-alpha-induced pro-inflammatory response in endothelial cells (ECs) via inhibition of TNF-alpha-induced NF-kappaB activation in ECs. Positively regulates lipid accumulation in adipose cells. The protein is Coiled-coil domain-containing protein 3 (CCDC3) of Homo sapiens (Human).